We begin with the raw amino-acid sequence, 238 residues long: Tyrosine recombinase XerD-like (238 aa).

Residues methionine 1–tyrosine 75 enclose the Core-binding (CB) domain. Residues valine 90–arginine 238 form the Tyr recombinase domain. Active-site residues include lysine 154 and arginine 204. The active-site O-(3'-phospho-DNA)-tyrosine intermediate is tyrosine 236.

Belongs to the 'phage' integrase family. XerD-like subfamily.

The protein resides in the cytoplasm. Functionally, putative tyrosine recombinase. Not involved in the cutting and rejoining of the recombining DNA molecules on dif(SL) site. This chain is Tyrosine recombinase XerD-like (ynbA), found in Lactococcus lactis subsp. lactis (strain IL1403) (Streptococcus lactis).